A 260-amino-acid polypeptide reads, in one-letter code: COP9 signalosome complex subunit 7 (260 aa).

The PCI domain maps to 1–159; the sequence is MDIEQKQAEI…RCFEVPFAAG (159 aa). The segment at 228-260 is disordered; it reads IRGNKEMFGEPSGVMDYEEDGIRPKRRRHPVTR. Over residues 251 to 260 the composition is skewed to basic residues; it reads PKRRRHPVTR.

This sequence belongs to the CSN7/EIF3M family. CSN7 subfamily. As to quaternary structure, component of the CSN complex, probably composed of CSN1, CSN2, CSN3, CSN4, CSN5 (CSN5A or CSN5B), CSN6 (CSN6A or CSN6B), CSN7 and CSN8. In the CSN complex, it probably interacts directly with CSN4. Interacts (via PCI domain) with CSN1 (via PCI domain) and CSN8 (via PCI domain), and (via C-terminal tail) with CSN6A, TSO2 and RNR2A. Cannot interact simultaneously with CSN1 and CSN8 to form ternary complexes. Also exists as a monomeric form. Binds to the translation initiation factors TIF3E1 and TIF3H1. Post-translationally, phosphorylated.

It is found in the cytoplasm. Its subcellular location is the nucleus. In terms of biological role, component of the COP9 signalosome complex (CSN), a complex involved in various cellular and developmental processes such as photomorphogenesis and auxin and jasmonate responses. The CSN complex is an essential regulator of the ubiquitin (Ubl) conjugation pathway by mediating the deneddylation of the cullin subunits of SCF-type E3 ligase complexes, leading to decrease the Ubl ligase activity of SCF. It is involved in repression of photomorphogenesis in darkness by regulating the activity of COP1-containing Ubl ligase complexes. The complex is also required for degradation of IAA6 by regulating the activity of the Ubl ligase SCF-TIR complex. Regulates the TSO2 subcellular localization. May be involved in nucleic acid binding. This is COP9 signalosome complex subunit 7 (CSN7) from Arabidopsis thaliana (Mouse-ear cress).